The chain runs to 406 residues: Peptide transporter imqD (406 aa).

A disordered region spans residues 1–25; the sequence is MTAPADSTEKSETSETTTLQTTEVS. Positions 14-25 are enriched in low complexity; that stretch reads SETTTLQTTEVS. 6 helical membrane-spanning segments follow: residues 184 to 204, 220 to 240, 262 to 282, 309 to 329, 344 to 364, and 373 to 393; these read GLVA…LSQA, IPND…GPVI, ATGF…QKII, VFLQ…SFVT, AVVQ…GIAI, and LIWM…VFWI.

Belongs to the major facilitator superfamily. Proton-dependent oligopeptide transporter (POT/PTR) (TC 2.A.17) family.

Its subcellular location is the membrane. Functionally, peptide transporter; part of the gene cluster that mediates the biosynthesis of imizoquins A to D, tripeptide-derived alkaloids that serve a protective role against oxidative stress that are essential for normal germination. The sequence is that of Peptide transporter imqD from Aspergillus flavus (strain ATCC 200026 / FGSC A1120 / IAM 13836 / NRRL 3357 / JCM 12722 / SRRC 167).